A 293-amino-acid chain; its full sequence is Alcohol dehydrogenase 1 (293 aa).

Residues Cys-26, Cys-29, Cys-32, Cys-40, and Cys-104 each contribute to the Zn(2+) site. NAD(+) contacts are provided by residues 129–134 (GLGAVG), Asp-153, Arg-158, Thr-199, Val-222, 222–224 (VGV), and Phe-249.

It belongs to the zinc-containing alcohol dehydrogenase family. In terms of assembly, homodimer. It depends on Zn(2+) as a cofactor.

The protein resides in the cytoplasm. It carries out the reaction a primary alcohol + NAD(+) = an aldehyde + NADH + H(+). The catalysed reaction is a secondary alcohol + NAD(+) = a ketone + NADH + H(+). The sequence is that of Alcohol dehydrogenase 1 (ADH1) from Zea luxurians (Guatemalan teosinte).